Reading from the N-terminus, the 320-residue chain is Lipoyl synthase (320 aa).

[4Fe-4S] cluster-binding residues include Cys-67, Cys-72, Cys-78, Cys-93, Cys-97, Cys-100, and Ser-307. The Radical SAM core domain occupies 79-296; that stretch reads FNHGTATFMI…RDKANEMGFE (218 aa).

The protein belongs to the radical SAM superfamily. Lipoyl synthase family. The cofactor is [4Fe-4S] cluster.

Its subcellular location is the cytoplasm. It catalyses the reaction [[Fe-S] cluster scaffold protein carrying a second [4Fe-4S](2+) cluster] + N(6)-octanoyl-L-lysyl-[protein] + 2 oxidized [2Fe-2S]-[ferredoxin] + 2 S-adenosyl-L-methionine + 4 H(+) = [[Fe-S] cluster scaffold protein] + N(6)-[(R)-dihydrolipoyl]-L-lysyl-[protein] + 4 Fe(3+) + 2 hydrogen sulfide + 2 5'-deoxyadenosine + 2 L-methionine + 2 reduced [2Fe-2S]-[ferredoxin]. It functions in the pathway protein modification; protein lipoylation via endogenous pathway; protein N(6)-(lipoyl)lysine from octanoyl-[acyl-carrier-protein]: step 2/2. Functionally, catalyzes the radical-mediated insertion of two sulfur atoms into the C-6 and C-8 positions of the octanoyl moiety bound to the lipoyl domains of lipoate-dependent enzymes, thereby converting the octanoylated domains into lipoylated derivatives. The polypeptide is Lipoyl synthase (Haemophilus influenzae (strain 86-028NP)).